Consider the following 391-residue polypeptide: Elongation factor Tu (391 aa).

In terms of domain architecture, tr-type G spans 10-201; the sequence is KPHVNIGTIG…AVDEYIPTPA (192 aa). The interval 19 to 26 is G1; it reads GHVDHGKT. 19 to 26 is a binding site for GTP; the sequence is GHVDHGKT. Thr-26 serves as a coordination point for Mg(2+). Residues 55–59 are G2; the sequence is GITIS. The tract at residues 76–79 is G3; that stretch reads DCPG. GTP is bound by residues 76 to 80 and 131 to 134; these read DCPGH and NKVD. The interval 131 to 134 is G4; the sequence is NKVD. The interval 169 to 171 is G5; sequence SAL.

Belongs to the TRAFAC class translation factor GTPase superfamily. Classic translation factor GTPase family. EF-Tu/EF-1A subfamily. Monomer.

The protein resides in the cytoplasm. It catalyses the reaction GTP + H2O = GDP + phosphate + H(+). Its function is as follows. GTP hydrolase that promotes the GTP-dependent binding of aminoacyl-tRNA to the A-site of ribosomes during protein biosynthesis. This chain is Elongation factor Tu, found in Ruegeria pomeroyi (strain ATCC 700808 / DSM 15171 / DSS-3) (Silicibacter pomeroyi).